Consider the following 354-residue polypeptide: G-protein coupled estrogen receptor 1 (354 aa).

The Extracellular segment spans residues 1 to 40; that stretch reads MEEQTTSLVWIYVNSTEQLNTSYEYNTTYLIEDSDKYQSY. Residues 41–61 form a helical membrane-spanning segment; sequence VIGLFLSCLYTILLFPIGFIG. The Cytoplasmic segment spans residues 62–81; sequence NILILVVNLNHRGKMAIPDL. A helical membrane pass occupies residues 82 to 102; it reads YFVNLAVADLILVADSLIEVF. The Extracellular segment spans residues 103–112; that stretch reads NLNEKYYDYA. Residues 113–133 traverse the membrane as a helical segment; the sequence is VLCTFMSLFLQVNMYSSIFFL. C115 and C192 are oxidised to a cystine. The Cytoplasmic portion of the chain corresponds to 134–160; sequence TWMSFDRYIALANSMSSSPLRTMQHAK. The helical transmembrane segment at 161 to 181 threads the bilayer; it reads LSCGLIWMASILATLLPFTIV. Over 182-202 the chain is Extracellular; the sequence is QTQHRGEVHFCFANVFEIQWL. Residues 203 to 223 traverse the membrane as a helical segment; sequence EVTIGFLVPFSIIGLCYSLIG. The Cytoplasmic portion of the chain corresponds to 224-245; the sequence is RILMRSQKHRGLWPRRQKALRM. Residues 246 to 266 traverse the membrane as a helical segment; the sequence is IVVVVLVFFICWLPENVFISI. At 267–292 the chain is on the extracellular side; the sequence is QLLQGTADPSQRTATTLRHDYPLTGH. Residues 293–313 form a helical membrane-spanning segment; that stretch reads IVNLAAFSNSCLNPIIYSFLG. Topologically, residues 314-353 are cytoplasmic; it reads ETFRDKLRLFIKQKASWSVVNRFCHHGLDLHLPVRSEVSE.

The protein belongs to the G-protein coupled receptor 1 family. In terms of assembly, homodimer. Heterodimer. In terms of tissue distribution, expressed in oocytes (at protein level). Highly expressed in brain, heart, testis and ovary. Weakly expressed in muscle and intestine.

The protein localises to the nucleus. The protein resides in the cytoplasm. Its subcellular location is the perinuclear region. It is found in the cytoskeleton. It localises to the cytoplasmic vesicle membrane. The protein localises to the cell membrane. The protein resides in the basolateral cell membrane. Its subcellular location is the endoplasmic reticulum membrane. It is found in the early endosome. It localises to the recycling endosome. The protein localises to the golgi apparatus. The protein resides in the trans-Golgi network. Its subcellular location is the golgi apparatus membrane. It is found in the cell projection. It localises to the dendrite. The protein localises to the dendritic spine membrane. The protein resides in the axon. Its subcellular location is the postsynaptic density. It is found in the mitochondrion membrane. Its function is as follows. Membrane G-protein coupled estrogen receptor that binds to 17-beta-estradiol (E2) with high affinity, leading to rapid and transient activation of numerous intracellular signaling pathways. Plays a role in the embryonic development of sensory and motor neurons. May induce apoptosis and reduce proliferation of brain cells. Involved in maintenance of meiotic arrest in oocytes. This Micropogonias undulatus (Atlantic croaker) protein is G-protein coupled estrogen receptor 1 (gper1).